A 778-amino-acid polypeptide reads, in one-letter code: Aerobic respiration control sensor protein ArcB (778 aa).

At 1–25 the chain is on the cytoplasmic side; the sequence is MKQIRLLAQYYVDLMMKLGLVRFSM. A helical transmembrane segment spans residues 26–46; it reads LLALALVVLAIVVQMAVTMVL. The Periplasmic portion of the chain corresponds to 47–57; that stretch reads HGQVESIDVIR. The helical transmembrane segment at 58–78 threads the bilayer; that stretch reads SIFFGLLITPWAVYFLSVVVE. Residues 79–778 are Cytoplasmic-facing; it reads QLEESRQRLS…KAWVAKATKK (700 aa). Residues 153–223 enclose the PAS domain; the sequence is QSSFLRSFLD…ETDEKVFRHN (71 aa). The region spanning 226–278 is the PAC domain; sequence LTYEQWLDYPDGRKACFEIRKVPYYDRVGKRHGLMGFGRDITERKRYQDALER. The region spanning 289–507 is the Histidine kinase domain; sequence TISHELRTPL…TFTLTIHAPS (219 aa). Histidine 292 is subject to Phosphohistidine; by autocatalysis. Residues 527–643 enclose the Response regulatory domain; sequence NVLLVEDIEL…ALTAMIKKFW (117 aa). Aspartate 576 is modified (4-aspartylphosphate). Residues 678-771 enclose the HPt domain; that stretch reads GPKLITDGLA…RHDVEVLKAW (94 aa). Histidine 717 carries the post-translational modification Phosphohistidine.

Activation requires a sequential transfer of a phosphate group from a His in the primary transmitter domain, to an Asp in the receiver domain and to a His in the secondary transmitter domain.

The protein resides in the cell inner membrane. The enzyme catalyses ATP + protein L-histidine = ADP + protein N-phospho-L-histidine.. In terms of biological role, member of the two-component regulatory system ArcB/ArcA. Sensor-regulator protein for anaerobic repression of the arc modulon. Activates ArcA via a four-step phosphorelay. ArcB can also dephosphorylate ArcA by a reverse phosphorelay involving His-717 and Asp-576. The polypeptide is Aerobic respiration control sensor protein ArcB (arcB) (Escherichia coli O157:H7).